A 424-amino-acid chain; its full sequence is Adenylosuccinate synthetase (424 aa).

GTP is bound by residues 12-18 (GDEGKGK) and 40-42 (GHT). Asp-13 functions as the Proton acceptor in the catalytic mechanism. Mg(2+) contacts are provided by Asp-13 and Gly-40. Residues 13-16 (DEGK), 38-41 (NAGH), Thr-130, Arg-144, Asn-220, Thr-235, and Arg-299 contribute to the IMP site. The Proton donor role is filled by His-41. A substrate-binding site is contributed by 295 to 301 (VTTGRRR). Residues Arg-301, 327–329 (KLD), and 412–414 (GTG) each bind GTP.

It belongs to the adenylosuccinate synthetase family. In terms of assembly, homodimer. Mg(2+) is required as a cofactor.

Its subcellular location is the cytoplasm. It carries out the reaction IMP + L-aspartate + GTP = N(6)-(1,2-dicarboxyethyl)-AMP + GDP + phosphate + 2 H(+). Its pathway is purine metabolism; AMP biosynthesis via de novo pathway; AMP from IMP: step 1/2. Its function is as follows. Plays an important role in the de novo pathway and in the salvage pathway of purine nucleotide biosynthesis. Catalyzes the first committed step in the biosynthesis of AMP from IMP. The polypeptide is Adenylosuccinate synthetase (Neosartorya fischeri (strain ATCC 1020 / DSM 3700 / CBS 544.65 / FGSC A1164 / JCM 1740 / NRRL 181 / WB 181) (Aspergillus fischerianus)).